Here is a 78-residue protein sequence, read N- to C-terminus: MAKVCVVTGKRPISGNNVSHANNRTRRRFYPNLHTHRFWVENENRFVKLKLSAKGLRIIDKKGIDTVLAKIRIRGEKV.

The protein belongs to the bacterial ribosomal protein bL28 family.

The protein is Large ribosomal subunit protein bL28 of Ruthia magnifica subsp. Calyptogena magnifica.